We begin with the raw amino-acid sequence, 647 residues long: MINITFPDGAVREFESGVTTFEIAQSISNSLAKKALAGKFNGKLIDTTRAITEDGSIEIVTPDHEDALPILRHSAAHLFAQAARRLFPDIHLGVGPAIEDGFYYDTDNTAGQISNEDLPRIEEEMQKIVKENFPSIREEVTKDEAREIFKNDPYKLELIEEHSEDEGGLTIYRQGEYVDLCRGPHVPSTGRIQIFHLLHVAGAYWRGNSDNAMMQRIYGTAWFDKKDLKNYLQMREEAKERDHRKLGKELDLFIISQEVGQGLPFWLPNGATIRRELERYIVNKELASGYQHVYTPPLASVELYKTSGHWDHYQEDMFPTMDMGDGEEFVLRPMNCPHHIQVFKHHVHSYRELPIRIAEIGMMHRYEKSGALTGLQRVREMSLNDGHLFVTPEQIQEEFQRALQLIIDVYEDFNLTDYRFRLSLRDPQDTHKYFDNDEMWENAQTMLRAALDEMGVNYFEAEGEAAFYGPKLDIQIKTALGKEETLSTIQLDFLLPERFDLKYIGADGEDHRPVMIHRGVISTMERFTAILIENYKGAFPTWLAPHQVTLIPVSNEKHVDYAWEVAKKLRDRGVRADVDERNEKMQFKIRASQTSKIPYQLIVGDKEMEDETVNVRRYGQKETQTVSVDNFVQAILADIANKSRVEK.

A TGS domain is found at 1–61 (MINITFPDGA…TEDGSIEIVT (61 aa)). The interval 242–540 (DHRKLGKELD…LIENYKGAFP (299 aa)) is catalytic. Zn(2+) contacts are provided by cysteine 336, histidine 387, and histidine 517.

Belongs to the class-II aminoacyl-tRNA synthetase family. As to quaternary structure, homodimer. The cofactor is Zn(2+).

The protein resides in the cytoplasm. The catalysed reaction is tRNA(Thr) + L-threonine + ATP = L-threonyl-tRNA(Thr) + AMP + diphosphate + H(+). Its function is as follows. Catalyzes the attachment of threonine to tRNA(Thr) in a two-step reaction: L-threonine is first activated by ATP to form Thr-AMP and then transferred to the acceptor end of tRNA(Thr). Also edits incorrectly charged L-seryl-tRNA(Thr). This chain is Threonine--tRNA ligase, found in Streptococcus pneumoniae (strain P1031).